A 237-amino-acid polypeptide reads, in one-letter code: NAD-dependent protein deacylase (237 aa).

The Deacetylase sirtuin-type domain occupies 1–235 (MRIAVLSGAG…PGLLQRLPAL (235 aa)). 8–28 (GAGISAESGVPTFRDDKNGLW) contacts NAD(+). Substrate-binding residues include Tyr53 and Arg56. An NAD(+)-binding site is contributed by 86 to 89 (QNVD). The active-site Proton acceptor is the His104. Zn(2+) is bound by residues Cys112, Cys115, Cys138, and Cys140. NAD(+) is bound by residues 177–179 (GTS), 203–205 (NPE), and Ala221.

It belongs to the sirtuin family. Class III subfamily. Zn(2+) serves as cofactor.

The protein localises to the cytoplasm. It catalyses the reaction N(6)-acetyl-L-lysyl-[protein] + NAD(+) + H2O = 2''-O-acetyl-ADP-D-ribose + nicotinamide + L-lysyl-[protein]. The enzyme catalyses N(6)-succinyl-L-lysyl-[protein] + NAD(+) + H2O = 2''-O-succinyl-ADP-D-ribose + nicotinamide + L-lysyl-[protein]. In terms of biological role, NAD-dependent lysine deacetylase and desuccinylase that specifically removes acetyl and succinyl groups on target proteins. Modulates the activities of several proteins which are inactive in their acylated form. The chain is NAD-dependent protein deacylase from Mycolicibacterium paratuberculosis (strain ATCC BAA-968 / K-10) (Mycobacterium paratuberculosis).